The sequence spans 187 residues: GTP cyclohydrolase 1 (187 aa).

Zn(2+)-binding residues include cysteine 78, histidine 81, and cysteine 149.

The protein belongs to the GTP cyclohydrolase I family. Toroid-shaped homodecamer, composed of two pentamers of five dimers.

It carries out the reaction GTP + H2O = 7,8-dihydroneopterin 3'-triphosphate + formate + H(+). The protein operates within cofactor biosynthesis; 7,8-dihydroneopterin triphosphate biosynthesis; 7,8-dihydroneopterin triphosphate from GTP: step 1/1. The protein is GTP cyclohydrolase 1 of Wolinella succinogenes (strain ATCC 29543 / DSM 1740 / CCUG 13145 / JCM 31913 / LMG 7466 / NCTC 11488 / FDC 602W) (Vibrio succinogenes).